The sequence spans 347 residues: NADH-ubiquinone oxidoreductase chain 2 (347 aa).

The next 11 membrane-spanning stretches (helical) occupy residues 3-23 (PLILLLITLTVILGTLIVMMS), 25-45 (HWLMIWMGFEMNMLAVIPLLM), 59-79 (YFLTQATASMLLMLAIIINLM), 96-116 (IIMTLALMMKLGLAPFHFWVP), 122-142 (ISLTSGLILLTWQKLAPLSIL), 148-168 (VINPDLLLMASMLSIAIGGWG), 178-198 (ILAYSSIAHMGWMMSVLAFNP), 202-222 (LLNLFMYILMTSTTFMLFMVA), 240-260 (ITTSILIMMLSLGGLPPLAGF), 276-296 (IILATLMAITALLNLFFYIRL), and 326-346 (LPPLIIMSTLTLPLAPAMILL).

Belongs to the complex I subunit 2 family. In terms of assembly, core subunit of respiratory chain NADH dehydrogenase (Complex I) which is composed of 45 different subunits. Interacts with TMEM242.

The protein resides in the mitochondrion inner membrane. The catalysed reaction is a ubiquinone + NADH + 5 H(+)(in) = a ubiquinol + NAD(+) + 4 H(+)(out). In terms of biological role, core subunit of the mitochondrial membrane respiratory chain NADH dehydrogenase (Complex I) which catalyzes electron transfer from NADH through the respiratory chain, using ubiquinone as an electron acceptor. Essential for the catalytic activity and assembly of complex I. The sequence is that of NADH-ubiquinone oxidoreductase chain 2 from Peropteryx kappleri (Greater dog-like bat).